A 427-amino-acid polypeptide reads, in one-letter code: Glutamate-1-semialdehyde 2,1-aminomutase 2 (427 aa).

Residue K267 is modified to N6-(pyridoxal phosphate)lysine.

Belongs to the class-III pyridoxal-phosphate-dependent aminotransferase family. HemL subfamily. As to quaternary structure, homodimer. Pyridoxal 5'-phosphate is required as a cofactor.

It localises to the cytoplasm. The catalysed reaction is (S)-4-amino-5-oxopentanoate = 5-aminolevulinate. The protein operates within porphyrin-containing compound metabolism; protoporphyrin-IX biosynthesis; 5-aminolevulinate from L-glutamyl-tRNA(Glu): step 2/2. In Staphylococcus saprophyticus subsp. saprophyticus (strain ATCC 15305 / DSM 20229 / NCIMB 8711 / NCTC 7292 / S-41), this protein is Glutamate-1-semialdehyde 2,1-aminomutase 2.